Here is a 438-residue protein sequence, read N- to C-terminus: MIHTIRLYIEKYRLLSEDRPVLVGLSGGADSVALLGVLVRLGYPCIALHCNFHLRGEESDRDEAFACEFAESLEVPFHKIDFDTISYAGERHLSIEMAARELRYAWFEEMRERLGGQATAVAHHRDDNVETVLMNLIRGTGIRGMSGIRPRNGFIVRPLLCVSREDILAWLADQGYAYMVDSTNLSDAYTRNFIRLNVLPLLEEINPSARNTIARSAEHLSAAETIYIYVLEQARKEVVVSDDRLSIGALMRFPAPETILYELLKEYGFTRLVSDDIFAALTKEPGKLFYSSTHRLLKDRDYLWITSLEKKEKRTFVLDPEKGINHEPIELSFQKLVITIDFPIEKNKRIAYLDYDKLDFPLTLRTWKEGDWFIPFGMKGRKKLSDYFSDHKFSRIEKERTWLLCSGDAIVWVVGERTDNRFRIDESTKRVLIVNFLG.

An ATP-binding site is contributed by 26–31 (SGGADS).

This sequence belongs to the tRNA(Ile)-lysidine synthase family.

The protein resides in the cytoplasm. It catalyses the reaction cytidine(34) in tRNA(Ile2) + L-lysine + ATP = lysidine(34) in tRNA(Ile2) + AMP + diphosphate + H(+). Ligates lysine onto the cytidine present at position 34 of the AUA codon-specific tRNA(Ile) that contains the anticodon CAU, in an ATP-dependent manner. Cytidine is converted to lysidine, thus changing the amino acid specificity of the tRNA from methionine to isoleucine. The chain is tRNA(Ile)-lysidine synthase from Parabacteroides distasonis (strain ATCC 8503 / DSM 20701 / CIP 104284 / JCM 5825 / NCTC 11152).